The sequence spans 270 residues: NAD kinase (270 aa).

Asp45 serves as the catalytic Proton acceptor. NAD(+) is bound by residues 45-46, 121-122, Arg147, Asp149, 160-165, and Ala184; these read DG, NE, and TAYSKS.

The protein belongs to the NAD kinase family. A divalent metal cation is required as a cofactor.

It localises to the cytoplasm. The enzyme catalyses NAD(+) + ATP = ADP + NADP(+) + H(+). Its function is as follows. Involved in the regulation of the intracellular balance of NAD and NADP, and is a key enzyme in the biosynthesis of NADP. Catalyzes specifically the phosphorylation on 2'-hydroxyl of the adenosine moiety of NAD to yield NADP. The polypeptide is NAD kinase (Lactobacillus helveticus (strain DPC 4571)).